A 469-amino-acid chain; its full sequence is Putative F-box/LRR-repeat protein At5g02930 (469 aa).

One can recognise an F-box domain in the interval 27 to 77 (VDSISDLPDAVLQHIFSYIPTELAIRTSVLSKRWRHVWSETPHLSFEWLKV). LRR repeat units follow at residues 30-58 (ISDL…VLSK), 178-203 (DCTM…SLKF), 204-214 (CMSLKYLNLSK), 223-250 (IERI…RLRD), 296-321 (TMLK…SLSK), and 341-366 (IIRS…TVYT).

The sequence is that of Putative F-box/LRR-repeat protein At5g02930 from Arabidopsis thaliana (Mouse-ear cress).